A 267-amino-acid chain; its full sequence is Hydroxyethylthiazole kinase (267 aa).

Position 46 (M46) interacts with substrate. 2 residues coordinate ATP: R122 and S168. G195 serves as a coordination point for substrate.

The protein belongs to the Thz kinase family. Mg(2+) is required as a cofactor.

The catalysed reaction is 5-(2-hydroxyethyl)-4-methylthiazole + ATP = 4-methyl-5-(2-phosphooxyethyl)-thiazole + ADP + H(+). It functions in the pathway cofactor biosynthesis; thiamine diphosphate biosynthesis; 4-methyl-5-(2-phosphoethyl)-thiazole from 5-(2-hydroxyethyl)-4-methylthiazole: step 1/1. Catalyzes the phosphorylation of the hydroxyl group of 4-methyl-5-beta-hydroxyethylthiazole (THZ). This is Hydroxyethylthiazole kinase from Nitratidesulfovibrio vulgaris (strain DP4) (Desulfovibrio vulgaris).